The following is a 411-amino-acid chain: NADH-quinone oxidoreductase subunit D (411 aa).

This sequence belongs to the complex I 49 kDa subunit family. As to quaternary structure, NDH-1 is composed of 14 different subunits. Subunits NuoB, C, D, E, F, and G constitute the peripheral sector of the complex.

Its subcellular location is the cell inner membrane. The catalysed reaction is a quinone + NADH + 5 H(+)(in) = a quinol + NAD(+) + 4 H(+)(out). In terms of biological role, NDH-1 shuttles electrons from NADH, via FMN and iron-sulfur (Fe-S) centers, to quinones in the respiratory chain. The immediate electron acceptor for the enzyme in this species is believed to be ubiquinone. Couples the redox reaction to proton translocation (for every two electrons transferred, four hydrogen ions are translocated across the cytoplasmic membrane), and thus conserves the redox energy in a proton gradient. This is NADH-quinone oxidoreductase subunit D from Phenylobacterium zucineum (strain HLK1).